The primary structure comprises 129 residues: Large ribosomal subunit protein uL22 (129 aa).

It belongs to the universal ribosomal protein uL22 family. In terms of assembly, part of the 50S ribosomal subunit.

Functionally, this protein binds specifically to 23S rRNA; its binding is stimulated by other ribosomal proteins, e.g. L4, L17, and L20. It is important during the early stages of 50S assembly. It makes multiple contacts with different domains of the 23S rRNA in the assembled 50S subunit and ribosome. The globular domain of the protein is located near the polypeptide exit tunnel on the outside of the subunit, while an extended beta-hairpin is found that lines the wall of the exit tunnel in the center of the 70S ribosome. The chain is Large ribosomal subunit protein uL22 from Metamycoplasma hominis (strain ATCC 23114 / DSM 25592 / NBRC 14850 / NCTC 10111 / PG21) (Mycoplasma hominis).